Reading from the N-terminus, the 511-residue chain is Histidine ammonia-lyase (511 aa).

The 5-imidazolinone (Ala-Gly) cross-link spans A143–G145. At S144 the chain carries 2,3-didehydroalanine (Ser).

It belongs to the PAL/histidase family. Contains an active site 4-methylidene-imidazol-5-one (MIO), which is formed autocatalytically by cyclization and dehydration of residues Ala-Ser-Gly.

It localises to the cytoplasm. The enzyme catalyses L-histidine = trans-urocanate + NH4(+). It participates in amino-acid degradation; L-histidine degradation into L-glutamate; N-formimidoyl-L-glutamate from L-histidine: step 1/3. The polypeptide is Histidine ammonia-lyase (Idiomarina loihiensis (strain ATCC BAA-735 / DSM 15497 / L2-TR)).